Consider the following 571-residue polypeptide: Cytoplasmic polyadenylation element-binding protein 2 (571 aa).

Disordered stretches follow at residues 1–23 (MSKS…NGDR) and 51–75 (FKQN…VSQE). The span at 61 to 75 (SESRHENEENKVSQE) shows a compositional bias: basic and acidic residues. Residues 435–517 (LVAFIGGVPR…KRVEIKPYFF (83 aa)) enclose the RRM domain.

Cytoplasmic polyadenylation element binding protein that binds to and regulates the translation of specific mRNAs. The polypeptide is Cytoplasmic polyadenylation element-binding protein 2 (cpb-2) (Caenorhabditis remanei (Caenorhabditis vulgaris)).